A 297-amino-acid chain; its full sequence is UDP-N-acetylglucosamine transporter TMEM241 (297 aa).

The next 10 helical transmembrane spans lie at Leu7–Val29, Phe32–Met52, Val69–Ala89, Leu93–Gln113, Thr121–Phe141, Phe146–Ile166, Ile187–Leu207, Phe211–Leu231, Trp250–Leu270, and Thr271–Ser291.

It belongs to the nucleotide-sugar transporter family. SLC35A subfamily. Widely expressed with high expression in lung.

It is found in the golgi apparatus. The protein resides in the cis-Golgi network membrane. Functionally, golgi-localized UDP-N-acetylglucosamine (UDP-GlcNAc) transporter that transports UDP-N-acetylglucosamine into Golgi lumen. Contributes to lysosomal targeting of NPC2, a key protein required for lysosomal cholesterol exiting, and that utilizes the mannose-6-phosphate (M6P) modification pathway for its lysosomal targeting. This chain is UDP-N-acetylglucosamine transporter TMEM241 (Tmem241), found in Mus musculus (Mouse).